The primary structure comprises 90 residues: Probable Fe(2+)-trafficking protein (90 aa).

This sequence belongs to the Fe(2+)-trafficking protein family.

Its function is as follows. Could be a mediator in iron transactions between iron acquisition and iron-requiring processes, such as synthesis and/or repair of Fe-S clusters in biosynthetic enzymes. In Koribacter versatilis (strain Ellin345), this protein is Probable Fe(2+)-trafficking protein.